The primary structure comprises 311 residues: 4-diphosphocytidyl-2-C-methyl-D-erythritol kinase (311 aa).

Lysine 13 is an active-site residue. Proline 114–alanine 124 contacts ATP. Aspartate 156 is a catalytic residue.

It belongs to the GHMP kinase family. IspE subfamily.

It catalyses the reaction 4-CDP-2-C-methyl-D-erythritol + ATP = 4-CDP-2-C-methyl-D-erythritol 2-phosphate + ADP + H(+). It participates in isoprenoid biosynthesis; isopentenyl diphosphate biosynthesis via DXP pathway; isopentenyl diphosphate from 1-deoxy-D-xylulose 5-phosphate: step 3/6. Catalyzes the phosphorylation of the position 2 hydroxy group of 4-diphosphocytidyl-2C-methyl-D-erythritol. In Corynebacterium diphtheriae (strain ATCC 700971 / NCTC 13129 / Biotype gravis), this protein is 4-diphosphocytidyl-2-C-methyl-D-erythritol kinase.